The following is a 398-amino-acid chain: MAKKSVANLTEADLSGKRVFVRVDFNVPLNESGVITDDTRIRAALPTIKYLTEKGAKVILGSHMGRPKGQVVDSMRLTPVAARLSELLGQSVTKCDDCVGDAVNQAIANLGNGQVALLENLRFNPGEEKNDPEFAKQLAANADIYVNDAFGTAHRAHGSTEGVTHHVDTSVAGLLIEKELQFLKGAIEAPKRPLVAIVGGSKVSSKIGVIETLLEKCDKLLIGGGMIFTFYKAQGKSVGGSLVEDDKIDLAKSLMEKAQGKILLPTDVIVADKFAPDAEAKTVSVDAIPDGWMGLDIGADSVKVFQEALDGCGTAIWNGPMGVFEFDKFAVGTEAIAKTLAGATETGTVTIIGGGDSVAAVEKVGVADKMSHISTGGGASLELLEGKELPGIVALDDA.

Substrate is bound by residues 24-26 (DFN), arginine 40, 63-66 (HMGR), arginine 122, and arginine 155. ATP contacts are provided by residues lysine 206, glycine 294, glutamate 325, and 354–357 (GGDS).

Belongs to the phosphoglycerate kinase family. Monomer.

It is found in the cytoplasm. It carries out the reaction (2R)-3-phosphoglycerate + ATP = (2R)-3-phospho-glyceroyl phosphate + ADP. Its pathway is carbohydrate degradation; glycolysis; pyruvate from D-glyceraldehyde 3-phosphate: step 2/5. This chain is Phosphoglycerate kinase, found in Picosynechococcus sp. (strain ATCC 27264 / PCC 7002 / PR-6) (Agmenellum quadruplicatum).